Consider the following 50-residue polypeptide: Large ribosomal subunit protein eL39 (50 aa).

Belongs to the eukaryotic ribosomal protein eL39 family.

The chain is Large ribosomal subunit protein eL39 from Methanoculleus marisnigri (strain ATCC 35101 / DSM 1498 / JR1).